The primary structure comprises 438 residues: 3-phosphoshikimate 1-carboxyvinyltransferase (438 aa).

3-phosphoshikimate is bound by residues lysine 21, serine 22, and arginine 26. Lysine 21 lines the phosphoenolpyruvate pocket. Phosphoenolpyruvate-binding residues include glycine 93 and arginine 121. Positions 166, 167, 168, 194, 324, and 351 each coordinate 3-phosphoshikimate. A phosphoenolpyruvate-binding site is contributed by glutamine 168. Catalysis depends on aspartate 324, which acts as the Proton acceptor. The phosphoenolpyruvate site is built by arginine 355 and arginine 395.

Belongs to the EPSP synthase family. Monomer.

It is found in the cytoplasm. The enzyme catalyses 3-phosphoshikimate + phosphoenolpyruvate = 5-O-(1-carboxyvinyl)-3-phosphoshikimate + phosphate. Its pathway is metabolic intermediate biosynthesis; chorismate biosynthesis. In terms of biological role, catalyzes the transfer of the enolpyruvyl moiety of phosphoenolpyruvate (PEP) to the 5-hydroxyl of shikimate-3-phosphate (S3P) to produce enolpyruvyl shikimate-3-phosphate and inorganic phosphate. This chain is 3-phosphoshikimate 1-carboxyvinyltransferase, found in Methanobrevibacter smithii (strain ATCC 35061 / DSM 861 / OCM 144 / PS).